Consider the following 209-residue polypeptide: tRNA(Phe) 7-((3-amino-3-carboxypropyl)-4-demethylwyosine(37)-N(4))-methyltransferase (209 aa).

This sequence belongs to the TYW3 family.

The catalysed reaction is 4-demethyl-7-[(3S)-3-amino-3-carboxypropyl]wyosine(37) in tRNA(Phe) + S-adenosyl-L-methionine = 7-[(3S)-3-amino-3-carboxypropyl]wyosine(37) in tRNA(Phe) + S-adenosyl-L-homocysteine + H(+). Its function is as follows. S-adenosyl-L-methionine-dependent methyltransferase that acts as a component of the wyosine derivatives biosynthesis pathway. Probably methylates N-4 position of wybutosine-86 to produce wybutosine-72. In Saccharolobus solfataricus (strain ATCC 35092 / DSM 1617 / JCM 11322 / P2) (Sulfolobus solfataricus), this protein is tRNA(Phe) 7-((3-amino-3-carboxypropyl)-4-demethylwyosine(37)-N(4))-methyltransferase.